The chain runs to 614 residues: Leucine-rich repeat and immunoglobulin-like domain-containing nogo receptor-interacting protein 1 (614 aa).

The signal sequence occupies residues Met-1–Gly-35. Cystine bridges form between Cys-36–Cys-42 and Cys-40–Cys-51. The LRRNT domain maps to Cys-36–Thr-65. Over Cys-36–Thr-555 the chain is Extracellular. LRR repeat units lie at residues Glu-66–Ser-87, His-90–Asn-111, Asn-114–Gly-135, Asn-138–Asp-159, Asn-162–Gly-183, Ser-186–His-207, Gly-210–Arg-231, Asn-258–His-279, Tyr-282–Glu-303, Arg-306–Gly-327, and Tyr-330–Ser-351. A glycan (N-linked (GlcNAc...) asparagine) is linked at Asn-138. N-linked (GlcNAc...) asparagine glycosylation is present at Asn-196. N-linked (GlcNAc...) asparagine glycans are attached at residues Asn-258, Asn-268, and Asn-287. Asn-335 carries N-linked (GlcNAc...) asparagine glycosylation. One can recognise an LRRCT domain in the interval Asn-363–Arg-417. Cystine bridges form between Cys-367–Cys-390, Cys-369–Cys-415, and Cys-440–Cys-491. Residues Pro-405–His-507 enclose the Ig-like C2-type domain. N-linked (GlcNAc...) asparagine glycans are attached at residues Asn-486 and Asn-536. Residues Thr-556–Trp-576 form a helical membrane-spanning segment. The Cytoplasmic portion of the chain corresponds to Ser-577–Ile-614. Ser-596 carries the post-translational modification Phosphoserine.

In terms of assembly, homotetramer. Forms a ternary complex with RTN4R/NGFR and RTN4R/TNFRSF19. Interacts with NGRF, RTN4R and MYT1L. Post-translationally, N-glycosylated. Contains predominantly high-mannose glycans.

The protein localises to the cell membrane. Functional component of the Nogo receptor signaling complex (RTN4R/NGFR) in RhoA activation responsible for some inhibition of axonal regeneration by myelin-associated factors. Is also an important negative regulator of oligodentrocyte differentiation and axonal myelination. Acts in conjunction with RTN4 and RTN4R in regulating neuronal precursor cell motility during cortical development. The protein is Leucine-rich repeat and immunoglobulin-like domain-containing nogo receptor-interacting protein 1 (LINGO1) of Macaca fascicularis (Crab-eating macaque).